We begin with the raw amino-acid sequence, 327 residues long: Embigin (327 aa).

The first 32 residues, 1–32 (MRALPGLLEARARTPRLLLLQCLLAAARPSSA), serve as a signal peptide directing secretion. Over 33–260 (DGSAPDSPFT…ELVVLSYLVP (228 aa)) the chain is Extracellular. N-linked (GlcNAc...) asparagine glycans are attached at residues Asn-54, Asn-61, Asn-75, Asn-85, Asn-100, Asn-189, Asn-196, Asn-213, and Asn-218. 2 consecutive Ig-like V-type domains span residues 71–158 (PVEK…NFKV) and 159–253 (PELH…IELV). Disulfide bonds link Cys-88–Cys-142 and Cys-180–Cys-237. The chain crosses the membrane as a helical span at residues 261-281 (LKPFLVIVAEVILLVATILLC). The Cytoplasmic portion of the chain corresponds to 282–327 (EKYTQKKKKHSDEGKEFEQIEQLKSDDSNGIENNVPRHRKNESLGQ). The segment at 287–327 (KKKKHSDEGKEFEQIEQLKSDDSNGIENNVPRHRKNESLGQ) is disordered. Over residues 291 to 308 (HSDEGKEFEQIEQLKSDD) the composition is skewed to basic and acidic residues. Ser-309 bears the Phosphoserine mark.

As to quaternary structure, interacts with SLC16A1, SLC16A6 and SLC16A7.

It localises to the cell membrane. The protein resides in the synapse. Plays a role in the outgrowth of motoneurons and in the formation of neuromuscular junctions. Following muscle denervation, promotes nerve terminal sprouting and the formation of additional acetylcholine receptor clusters at synaptic sites without affecting terminal Schwann cell number or morphology. Delays the retraction of terminal sprouts following re-innervation of denervated endplates. May play a role in targeting the monocarboxylate transporters SLC16A1, SLC16A6 and SLC16A7 to the cell membrane. This is Embigin (EMB) from Homo sapiens (Human).